We begin with the raw amino-acid sequence, 201 residues long: Probable chemoreceptor glutamine deamidase CheD 2 (201 aa).

The protein belongs to the CheD family.

The catalysed reaction is L-glutaminyl-[protein] + H2O = L-glutamyl-[protein] + NH4(+). Its function is as follows. Probably deamidates glutamine residues to glutamate on methyl-accepting chemotaxis receptors (MCPs), playing an important role in chemotaxis. This is Probable chemoreceptor glutamine deamidase CheD 2 from Chromobacterium violaceum (strain ATCC 12472 / DSM 30191 / JCM 1249 / CCUG 213 / NBRC 12614 / NCIMB 9131 / NCTC 9757 / MK).